The following is a 154-amino-acid chain: MTKQVEIFTDGSCLGNPGPGGYGAILRYKQHEKTFSAGYYLTTNNRMELMAAIVALEALTSPCEVTLSTDSQYVRQGITQWIHNWKKRGWKTADRKPVRNVDLWQRLDLAIQSHTIQWEWVKGHAGHPENERCDELARQGANSPTLDDTGYNPD.

In terms of domain architecture, RNase H type-1 spans 1–142 (MTKQVEIFTD…CDELARQGAN (142 aa)). Residues Asp10, Glu48, Asp70, and Asp134 each contribute to the Mg(2+) site.

This sequence belongs to the RNase H family. As to quaternary structure, monomer. Mg(2+) is required as a cofactor.

The protein resides in the cytoplasm. The enzyme catalyses Endonucleolytic cleavage to 5'-phosphomonoester.. Endonuclease that specifically degrades the RNA of RNA-DNA hybrids. This is Ribonuclease H from Yersinia pestis bv. Antiqua (strain Antiqua).